The sequence spans 219 residues: Germin-like protein subfamily 2 member 3 (219 aa).

Residues 1–22 (MATSMIPIFVTFMLVAAHMALA) form the signal peptide. Cysteines 31 and 46 form a disulfide. In terms of domain architecture, Cupin type-1 spans 60–209 (IGLATAAATA…AFGAAAPEIQ (150 aa)). Asn-70 is a glycosylation site (N-linked (GlcNAc...) asparagine). Positions 109, 111, 116, and 155 each coordinate Mn(2+).

The protein belongs to the germin family. In terms of assembly, oligomer (believed to be a pentamer but probably hexamer).

The protein resides in the secreted. It is found in the extracellular space. The protein localises to the apoplast. May play a role in plant defense. Probably has no oxalate oxidase activity even if the active site is conserved. This is Germin-like protein subfamily 2 member 3 (GLP8) from Arabidopsis thaliana (Mouse-ear cress).